Reading from the N-terminus, the 224-residue chain is Small ribosomal subunit protein uS3 (224 aa).

Residues 38–106 (LREFVKEKLG…EVYLNVVEVR (69 aa)) enclose the KH type-2 domain.

It belongs to the universal ribosomal protein uS3 family. Part of the 30S ribosomal subunit. Forms a tight complex with proteins S10 and S14.

Its function is as follows. Binds the lower part of the 30S subunit head. Binds mRNA in the 70S ribosome, positioning it for translation. This is Small ribosomal subunit protein uS3 from Anaeromyxobacter dehalogenans (strain 2CP-C).